The primary structure comprises 345 residues: Succinylglutamate desuccinylase (345 aa).

Zn(2+) is bound by residues histidine 63, glutamate 66, and histidine 160. Glutamate 224 is an active-site residue.

The protein belongs to the AspA/AstE family. Succinylglutamate desuccinylase subfamily. It depends on Zn(2+) as a cofactor.

It catalyses the reaction N-succinyl-L-glutamate + H2O = L-glutamate + succinate. It participates in amino-acid degradation; L-arginine degradation via AST pathway; L-glutamate and succinate from L-arginine: step 5/5. In terms of biological role, transforms N(2)-succinylglutamate into succinate and glutamate. The chain is Succinylglutamate desuccinylase from Shewanella woodyi (strain ATCC 51908 / MS32).